A 307-amino-acid chain; its full sequence is MEDEEGIGLILARATELRLKISDCIDNSSTTVSDNGDGNEDLSPGEGRKSEIIGNQDKDFDSISSEDVDEAEAERLLRIRDALEALESQLASLQNLRQRQQYEKQLALSEIDYSRKMLLEKLKEYKGKDFEVLRETTTFAGERVDYENDLLLPPYPVHPPLSLGLDNNNGYLSHLPSKKKSDANGFGSGHVRNEAEAKSPNGGSGGSSHGVIRFLGSVAKIVLPIIGVISLLSASGYGPEMRKRGASLNLFGLLPHRATRGKRTPNQCPPGKVLVIEDGEARCLVKERVEIPFDSVVAKRDVTYGYG.

Position 1 is an N-acetylmethionine (Met-1). Topologically, residues 1–213 (MEDEEGIGLI…SGGSSHGVIR (213 aa)) are cytoplasmic. The segment at 28–66 (SSTTVSDNGDGNEDLSPGEGRKSEIIGNQDKDFDSISSE) is disordered. The span at 46-61 (EGRKSEIIGNQDKDFD) shows a compositional bias: basic and acidic residues. Phosphoserine is present on Ser-50. Residues 76–103 (LLRIRDALEALESQLASLQNLRQRQQYE) are a coiled coil. The interval 174–206 (HLPSKKKSDANGFGSGHVRNEAEAKSPNGGSGG) is disordered. A helical transmembrane segment spans residues 214–234 (FLGSVAKIVLPIIGVISLLSA). Over 235–307 (SGYGPEMRKR…AKRDVTYGYG (73 aa)) the chain is Chloroplast intermembrane. The interval 235 to 307 (SGYGPEMRKR…AKRDVTYGYG (73 aa)) is ARC6 binding.

In terms of assembly, interacts (via C-terminus) with ARC6 (via C-terminus) in the chloroplast intermembrane space; this interaction induces ARC6 homodimerization and leads to the formation of a heterotetramer containing two ARC6 and two PDV2 subunits. Interacts with ARC5/DRP5B. As to expression, mostly expressed in young leaves.

The protein localises to the plastid. Its subcellular location is the chloroplast outer membrane. Component of the plastid division machinery consisting in a binary fission accomplished by the simultaneous constriction of the FtsZ ring on the stromal side of the inner envelope membrane, and the ARC5/DRP5B ring on the cytosolic side of the outer envelope membrane. Positive factor of chloroplast division required, with a dosage effect, to mediate the recruitment and dimerization of ARC5/DRP5B at the midplastid constriction site in the cytoplasm at plastid outer envelope membranes (OEMs). Prevents ARC5/DRP5B GTPase acrivity. Relays plastid division site position between stroma and outer surface via interactions with the cytoplasmic ARC5/DRP5B and the inner membrane ARC6 that recruits stromal FtsZ ring. Binding to phosphatidylinositol 4-phosphate (PI4P) modulates negatively chloroplast division. The sequence is that of Plastid division protein PDV2 from Arabidopsis thaliana (Mouse-ear cress).